A 380-amino-acid polypeptide reads, in one-letter code: Deoxyguanosinetriphosphate triphosphohydrolase-like protein (380 aa).

In terms of domain architecture, HD spans 79-196; it reads RLTHTLEVQQ…VDAADALAYT (118 aa).

It belongs to the dGTPase family. Type 2 subfamily.

This Deinococcus deserti (strain DSM 17065 / CIP 109153 / LMG 22923 / VCD115) protein is Deoxyguanosinetriphosphate triphosphohydrolase-like protein.